A 38-amino-acid chain; its full sequence is Large ribosomal subunit protein bL36 (38 aa).

It belongs to the bacterial ribosomal protein bL36 family.

This is Large ribosomal subunit protein bL36 from Wigglesworthia glossinidia brevipalpis.